The chain runs to 287 residues: Large ribosomal subunit protein uL2 (287 aa).

Residues 222–266 (RGIRPTVRGSAMNPNDHPHGGGEGRSPVGRDAPRTPWGKRHMGVK) form a disordered region.

Belongs to the universal ribosomal protein uL2 family. As to quaternary structure, part of the 50S ribosomal subunit. Forms a bridge to the 30S subunit in the 70S ribosome.

One of the primary rRNA binding proteins. Required for association of the 30S and 50S subunits to form the 70S ribosome, for tRNA binding and peptide bond formation. It has been suggested to have peptidyltransferase activity; this is somewhat controversial. Makes several contacts with the 16S rRNA in the 70S ribosome. This chain is Large ribosomal subunit protein uL2, found in Mycoplasma pneumoniae (strain ATCC 29342 / M129 / Subtype 1) (Mycoplasmoides pneumoniae).